Consider the following 317-residue polypeptide: Acetyl-coenzyme A carboxylase carboxyl transferase subunit alpha (317 aa).

The CoA carboxyltransferase C-terminal domain occupies 39–293; sequence KLEGKAQEAL…GNAIAEAMGS (255 aa).

The protein belongs to the AccA family. Acetyl-CoA carboxylase is a heterohexamer composed of biotin carboxyl carrier protein (AccB), biotin carboxylase (AccC) and two subunits each of ACCase subunit alpha (AccA) and ACCase subunit beta (AccD).

Its subcellular location is the cytoplasm. The enzyme catalyses N(6)-carboxybiotinyl-L-lysyl-[protein] + acetyl-CoA = N(6)-biotinyl-L-lysyl-[protein] + malonyl-CoA. It participates in lipid metabolism; malonyl-CoA biosynthesis; malonyl-CoA from acetyl-CoA: step 1/1. Its function is as follows. Component of the acetyl coenzyme A carboxylase (ACC) complex. First, biotin carboxylase catalyzes the carboxylation of biotin on its carrier protein (BCCP) and then the CO(2) group is transferred by the carboxyltransferase to acetyl-CoA to form malonyl-CoA. The polypeptide is Acetyl-coenzyme A carboxylase carboxyl transferase subunit alpha (Azorhizobium caulinodans (strain ATCC 43989 / DSM 5975 / JCM 20966 / LMG 6465 / NBRC 14845 / NCIMB 13405 / ORS 571)).